The following is a 307-amino-acid chain: Ribosomal RNA small subunit methyltransferase A (307 aa).

S-adenosyl-L-methionine is bound by residues N35, V37, G62, E83, D113, and N136.

The protein belongs to the class I-like SAM-binding methyltransferase superfamily. rRNA adenine N(6)-methyltransferase family. RsmA subfamily.

Its subcellular location is the cytoplasm. It catalyses the reaction adenosine(1518)/adenosine(1519) in 16S rRNA + 4 S-adenosyl-L-methionine = N(6)-dimethyladenosine(1518)/N(6)-dimethyladenosine(1519) in 16S rRNA + 4 S-adenosyl-L-homocysteine + 4 H(+). In terms of biological role, specifically dimethylates two adjacent adenosines (A1518 and A1519) in the loop of a conserved hairpin near the 3'-end of 16S rRNA in the 30S particle. May play a critical role in biogenesis of 30S subunits. The polypeptide is Ribosomal RNA small subunit methyltransferase A (Bifidobacterium longum subsp. infantis (strain ATCC 15697 / DSM 20088 / JCM 1222 / NCTC 11817 / S12)).